The sequence spans 916 residues: Protein translocase subunit SecA (916 aa).

Residues Gln87, 105–109 (GEGKT), and Asp512 contribute to the ATP site. The disordered stretch occupies residues 857–916 (QHAEAPSMEQAVAGEEEELPEGPAPVVPLEPVRNEQKIGRNEPCPCGSGKKYKHCHGQLD). Zn(2+) is bound by residues Cys900, Cys902, Cys911, and His912. Over residues 906-916 (KKYKHCHGQLD) the composition is skewed to basic residues.

Belongs to the SecA family. As to quaternary structure, monomer and homodimer. Part of the essential Sec protein translocation apparatus which comprises SecA, SecYEG and auxiliary proteins SecDF-YajC and YidC. It depends on Zn(2+) as a cofactor.

It is found in the cell inner membrane. The protein localises to the cytoplasm. The catalysed reaction is ATP + H2O + cellular proteinSide 1 = ADP + phosphate + cellular proteinSide 2.. Its function is as follows. Part of the Sec protein translocase complex. Interacts with the SecYEG preprotein conducting channel. Has a central role in coupling the hydrolysis of ATP to the transfer of proteins into and across the cell membrane, serving both as a receptor for the preprotein-SecB complex and as an ATP-driven molecular motor driving the stepwise translocation of polypeptide chains across the membrane. This chain is Protein translocase subunit SecA, found in Pseudomonas aeruginosa (strain UCBPP-PA14).